The chain runs to 450 residues: Casein kinase 1-like protein 1 (450 aa).

One can recognise a Protein kinase domain in the interval 9–278 (FRLGRKIGSG…LKRIFRDLFI (270 aa)). Residues 15–23 (IGSGSFGEI) and K38 contribute to the ATP site. D128 acts as the Proton acceptor in catalysis. The disordered stretch occupies residues 311-450 (AVGTSAALPP…LQVSDEHHPH (140 aa)). Over residues 328 to 342 (YTGEEEGRPHMESSR) the composition is skewed to basic and acidic residues. Residues 349 to 365 (LDNSGNISNQPTSSSAR) show a composition bias toward polar residues. Residues 371 to 382 (SSSLFAQSAGSS) show a composition bias toward low complexity.

Belongs to the protein kinase superfamily. CK1 Ser/Thr protein kinase family. Casein kinase I subfamily. As to quaternary structure, monomer. Autophosphorylated. As to expression, expressed in flowers.

Its subcellular location is the cytoplasm. It localises to the cell junction. The protein resides in the plasmodesma. The enzyme catalyses L-seryl-[protein] + ATP = O-phospho-L-seryl-[protein] + ADP + H(+). It carries out the reaction L-threonyl-[protein] + ATP = O-phospho-L-threonyl-[protein] + ADP + H(+). Its function is as follows. Casein kinases are operationally defined by their preferential utilization of acidic proteins such as caseins as substrates. It can phosphorylate a large number of proteins. This chain is Casein kinase 1-like protein 1, found in Arabidopsis thaliana (Mouse-ear cress).